Consider the following 422-residue polypeptide: Isocitrate dehydrogenase [NADP] (422 aa).

Thr94 provides a ligand contact to NADP(+). Residues Ser103, Asn105, Arg109, Arg119, and Arg143 each contribute to the D-threo-isocitrate site. Asp310 contacts Mg(2+). NADP(+) is bound by residues 344–350, Asn357, Tyr396, and Arg400; that span reads HGTAPKY.

The protein belongs to the isocitrate and isopropylmalate dehydrogenases family. In terms of assembly, homodimer. Mg(2+) is required as a cofactor. Requires Mn(2+) as cofactor.

The enzyme catalyses D-threo-isocitrate + NADP(+) = 2-oxoglutarate + CO2 + NADPH. Its function is as follows. Catalyzes the oxidative decarboxylation of isocitrate to 2-oxoglutarate and carbon dioxide with the concomitant reduction of NADP(+). This is Isocitrate dehydrogenase [NADP] (icd) from Staphylococcus aureus (strain MSSA476).